A 467-amino-acid polypeptide reads, in one-letter code: 3-isopropylmalate dehydratase large subunit (467 aa).

[4Fe-4S] cluster is bound by residues C347, C407, and C410.

The protein belongs to the aconitase/IPM isomerase family. LeuC type 1 subfamily. In terms of assembly, heterodimer of LeuC and LeuD. It depends on [4Fe-4S] cluster as a cofactor.

The catalysed reaction is (2R,3S)-3-isopropylmalate = (2S)-2-isopropylmalate. It participates in amino-acid biosynthesis; L-leucine biosynthesis; L-leucine from 3-methyl-2-oxobutanoate: step 2/4. In terms of biological role, catalyzes the isomerization between 2-isopropylmalate and 3-isopropylmalate, via the formation of 2-isopropylmaleate. The protein is 3-isopropylmalate dehydratase large subunit of Gloeothece citriformis (strain PCC 7424) (Cyanothece sp. (strain PCC 7424)).